Consider the following 512-residue polypeptide: Nuclear fusion protein FUS1 (512 aa).

A helical transmembrane segment spans residues 72–96 (IGLSIGLPIGIFCFGLLILLCYFYL). The interval 97-512 (KRNSVSISNP…VPGDCLQEYD (416 aa)) is hydrophilic. T178 carries the post-translational modification Phosphothreonine. Residues S190 and S256 each carry the phosphoserine modification. Phosphothreonine occurs at positions 281 and 424. Residues 436-512 (QLGKTYTVIQ…VPGDCLQEYD (77 aa)) form the SH3 domain.

In terms of processing, O-glycosylated.

It is found in the membrane. In terms of biological role, required for cell fusion. Negatively regulates Sho1p signaling to ensure efficient cell fusion. Its function is as follows. Interacts with SHO1. In Saccharomyces cerevisiae (strain ATCC 204508 / S288c) (Baker's yeast), this protein is Nuclear fusion protein FUS1 (FUS1).